The chain runs to 187 residues: Small monomeric GTPase RhbA (187 aa).

Positions 17, 18, 19, 20, 21, 22, 33, and 34 each coordinate GDP. Ser17 provides a ligand contact to GTP. GTP-binding residues include Gly19, Lys20, Ser21, Ser22, and Val33. Ser21 is a binding site for Mg(2+). GTP-binding residues include Tyr36, Thr39, Asn120, Asp123, and Ala152. The Effector region signature appears at 36–44 (YYPTIENTF). Thr39 contributes to the Mg(2+) binding site. Residues Asn120, Asp123, and Ala152 each coordinate GDP. Cys184 carries S-farnesyl cysteine lipidation.

The protein belongs to the small GTPase superfamily. Rheb family. Post-translationally, farnesylation is important for efficiently activating mTORC1-mediated signaling.

It localises to the cell membrane. The enzyme catalyses GTP + H2O = GDP + phosphate + H(+). Alternates between an inactive form bound to GDP and an active form bound to GTP. In terms of biological role, small GTPase that acts as an allosteric activator of the canonical TOR pathway, an evolutionarily conserved central nutrient sensor that stimulates anabolic reactions and macromolecule biosynthesis to promote cellular biomass generation and growth. Plays a role in virulence. This chain is Small monomeric GTPase RhbA, found in Aspergillus fumigatus (strain ATCC MYA-4609 / CBS 101355 / FGSC A1100 / Af293) (Neosartorya fumigata).